Consider the following 348-residue polypeptide: NADH-ubiquinone oxidoreductase chain 2 (348 aa).

Helical transmembrane passes span 3 to 23 (PYVL…TFAS), 25 to 45 (HWLL…RLMA), 60 to 80 (FLTQ…NAWA), 99 to 119 (MMAL…PEVL), 122 to 142 (LDLT…FALI), 150 to 170 (NPML…WGGL), 178 to 196 (ILAY…ILQY), 200 to 219 (LTLI…FLSL), 246 to 266 (LTLL…KWLI), 274 to 294 (DLPA…YFYL), and 328 to 348 (LMMI…ALFF).

It belongs to the complex I subunit 2 family.

The protein localises to the mitochondrion inner membrane. The enzyme catalyses a ubiquinone + NADH + 5 H(+)(in) = a ubiquinol + NAD(+) + 4 H(+)(out). In terms of biological role, core subunit of the mitochondrial membrane respiratory chain NADH dehydrogenase (Complex I) that is believed to belong to the minimal assembly required for catalysis. Complex I functions in the transfer of electrons from NADH to the respiratory chain. The immediate electron acceptor for the enzyme is believed to be ubiquinone. The protein is NADH-ubiquinone oxidoreductase chain 2 (MT-ND2) of Formosania lacustris (Oriental stream loach).